Here is a 752-residue protein sequence, read N- to C-terminus: Polyribonucleotide nucleotidyltransferase (752 aa).

Mg(2+)-binding residues include Asp542 and Asp548. Residues 608–667 (PRITTIQIPVSKIGELIGPKGKNINALTEETGANISIEDDGTVFISAASGEAAEAAIEKI) enclose the KH domain. In terms of domain architecture, S1 motif spans 679 to 748 (GERFLGTVVK…NRGKISLVPV (70 aa)).

This sequence belongs to the polyribonucleotide nucleotidyltransferase family. Mg(2+) is required as a cofactor.

Its subcellular location is the cytoplasm. It catalyses the reaction RNA(n+1) + phosphate = RNA(n) + a ribonucleoside 5'-diphosphate. In terms of biological role, involved in mRNA degradation. Catalyzes the phosphorolysis of single-stranded polyribonucleotides processively in the 3'- to 5'-direction. The polypeptide is Polyribonucleotide nucleotidyltransferase (Corynebacterium efficiens (strain DSM 44549 / YS-314 / AJ 12310 / JCM 11189 / NBRC 100395)).